The primary structure comprises 863 residues: Paramyosin (863 aa).

The nonhelical region stretch occupies residues 1-26 (MSESHVKISRTIIRGTSPSTVRLESP). Positions 27-836 (VRELEDLLDL…ERTITIKRTI (810 aa)) form a coiled coil. The nonhelical region stretch occupies residues 837–863 (GGPGSRAVSVVREINSVSRGNRATSIM).

Belongs to the paramyosin family. Homodimer.

The protein resides in the cytoplasm. It localises to the myofibril. In terms of biological role, paramyosin is a major structural component of many thick filaments isolated from invertebrate muscles. This is Paramyosin from Echinococcus granulosus (Hydatid tapeworm).